A 337-amino-acid chain; its full sequence is Holliday junction branch migration complex subunit RuvB (337 aa).

A large ATPase domain (RuvB-L) region spans residues Met1–Tyr179. ATP-binding positions include Leu18, Arg19, Gly60, Lys63, Thr64, Ser65, Glu126–Tyr128, Arg169, Tyr179, and Arg216. Thr64 serves as a coordination point for Mg(2+). Residues Ser180–Leu250 form a small ATPAse domain (RuvB-S) region. The tract at residues Asp253–Lys337 is head domain (RuvB-H). DNA is bound by residues Lys308 and Arg313.

This sequence belongs to the RuvB family. As to quaternary structure, homohexamer. Forms an RuvA(8)-RuvB(12)-Holliday junction (HJ) complex. HJ DNA is sandwiched between 2 RuvA tetramers; dsDNA enters through RuvA and exits via RuvB. An RuvB hexamer assembles on each DNA strand where it exits the tetramer. Each RuvB hexamer is contacted by two RuvA subunits (via domain III) on 2 adjacent RuvB subunits; this complex drives branch migration. In the full resolvosome a probable DNA-RuvA(4)-RuvB(12)-RuvC(2) complex forms which resolves the HJ.

The protein resides in the cytoplasm. The catalysed reaction is ATP + H2O = ADP + phosphate + H(+). Functionally, the RuvA-RuvB-RuvC complex processes Holliday junction (HJ) DNA during genetic recombination and DNA repair, while the RuvA-RuvB complex plays an important role in the rescue of blocked DNA replication forks via replication fork reversal (RFR). RuvA specifically binds to HJ cruciform DNA, conferring on it an open structure. The RuvB hexamer acts as an ATP-dependent pump, pulling dsDNA into and through the RuvAB complex. RuvB forms 2 homohexamers on either side of HJ DNA bound by 1 or 2 RuvA tetramers; 4 subunits per hexamer contact DNA at a time. Coordinated motions by a converter formed by DNA-disengaged RuvB subunits stimulates ATP hydrolysis and nucleotide exchange. Immobilization of the converter enables RuvB to convert the ATP-contained energy into a lever motion, pulling 2 nucleotides of DNA out of the RuvA tetramer per ATP hydrolyzed, thus driving DNA branch migration. The RuvB motors rotate together with the DNA substrate, which together with the progressing nucleotide cycle form the mechanistic basis for DNA recombination by continuous HJ branch migration. Branch migration allows RuvC to scan DNA until it finds its consensus sequence, where it cleaves and resolves cruciform DNA. This Chlamydia felis (strain Fe/C-56) (Chlamydophila felis) protein is Holliday junction branch migration complex subunit RuvB.